A 64-amino-acid chain; its full sequence is Crotamine CRO3 (64 aa).

Positions 1–22 (MILYLLFAFLFLAFLSEPGNAY) are cleaved as a signal peptide. 3 cysteine pairs are disulfide-bonded: Cys25–Cys57, Cys32–Cys51, and Cys39–Cys58.

Belongs to the crotamine-myotoxin family. Monomer. Expressed by the venom gland.

It localises to the secreted. Cationic peptide that possesses multiple functions. It acts as a cell-penetrating peptide (CPP), and as a potent voltage-gated potassium channel (Kv) inhibitor. It exhibits antimicrobial activities, hind limb paralysis, and severe muscle necrosis by a non-enzymatic mechanism. The chain is Crotamine CRO3 (CRO3) from Crotalus durissus terrificus (South American rattlesnake).